Consider the following 220-residue polypeptide: Tumor protein p53-inducible nuclear protein 2 (220 aa).

Residues 1-12 (MFQRLSSLFFST) are compositionally biased toward low complexity. 3 disordered regions span residues 1–24 (MFQRLSSLFFSTPSPPEDPDCPRA), 41–69 (PDSYAAPPSPGAAPAPAGRPPPAPSLMDE), and 119–220 (PGSP…QFNY). Ser14 carries the phosphoserine modification. An LIR motif is present at residues 26–41 (VSEEDEVDGWLIIDLP). Pro residues predominate over residues 47–64 (PPSPGAAPAPAGRPPPAP). Ser136 carries the post-translational modification Phosphoserine. Low complexity predominate over residues 152 to 170 (HAAPLPARAALLEKAGQVR). Residues 205–220 (NQSSFIYQPCQRQFNY) are compositionally biased toward polar residues.

In terms of assembly, interacts with VMP1, GABARAP, GABARAPL1, GABARAPL2, MAP1LC3A, MAP1LC3B, MAP1LC3C and THRA.

It localises to the cytoplasm. The protein resides in the cytosol. Its subcellular location is the nucleus. The protein localises to the PML body. It is found in the cytoplasmic vesicle. It localises to the autophagosome. In terms of biological role, dual regulator of transcription and autophagy. Positively regulates autophagy and is required for autophagosome formation and processing. May act as a scaffold protein that recruits MAP1LC3A, GABARAP and GABARAPL2 and brings them to the autophagosome membrane by interacting with VMP1 where, in cooperation with the BECN1-PI3-kinase class III complex, they trigger autophagosome development. Acts as a transcriptional activator of THRA. In Homo sapiens (Human), this protein is Tumor protein p53-inducible nuclear protein 2 (TP53INP2).